The chain runs to 62 residues: Large ribosomal subunit protein bL33 (62 aa).

The protein belongs to the bacterial ribosomal protein bL33 family.

The sequence is that of Large ribosomal subunit protein bL33 from Bacteroides thetaiotaomicron (strain ATCC 29148 / DSM 2079 / JCM 5827 / CCUG 10774 / NCTC 10582 / VPI-5482 / E50).